Here is a 280-residue protein sequence, read N- to C-terminus: 3-hydroxyanthranilate 3,4-dioxygenase (280 aa).

Residues 1–160 (MAIPVNVKKW…SEQYKSGKPD (160 aa)) are domain A (catalytic). R43 contacts O2. 3 residues coordinate Fe cation: H47, E53, and H91. Position 53 (E53) interacts with substrate. Substrate contacts are provided by R95 and E105. The tract at residues 161–177 (PAQPIGKMPFFLNTEQV) is linker. Positions 178–280 (MEPFSFQNWL…IALSTSQVPA (103 aa)) are domain B.

Belongs to the 3-HAO family. In terms of assembly, monomer. The cofactor is Fe(2+).

It localises to the cytoplasm. The protein resides in the cytosol. The enzyme catalyses 3-hydroxyanthranilate + O2 = (2Z,4Z)-2-amino-3-carboxymuconate 6-semialdehyde. The protein operates within cofactor biosynthesis; NAD(+) biosynthesis; quinolinate from L-kynurenine: step 3/3. Functionally, catalyzes the oxidative ring opening of 3-hydroxyanthranilate to 2-amino-3-carboxymuconate semialdehyde, which spontaneously cyclizes to quinolinate. In Xenopus tropicalis (Western clawed frog), this protein is 3-hydroxyanthranilate 3,4-dioxygenase (haao).